A 409-amino-acid chain; its full sequence is Na(+)/H(+) antiporter NhaA 2 (409 aa).

12 helical membrane-spanning segments follow: residues 10 to 30 (VAAG…NTPA), 60 to 80 (GLLV…FLAG), 89 to 109 (LVPA…YLAI), 118 to 138 (GWPV…AVFG), 148 to 168 (FLLA…AVFF), 171 to 191 (GLDL…AVVG), 203 to 223 (IAVV…TLSS), 224 to 244 (GIHA…LSGL), 257 to 277 (IVLP…IGLA), 283 to 303 (FWGI…AGGL), 328 to 348 (LLGG…FAGL), and 356 to 376 (TLAV…TLSI). Positions 384–409 (AGAAADDDDATRDDFPAHADGGPARA) are disordered.

It belongs to the NhaA Na(+)/H(+) (TC 2.A.33) antiporter family.

The protein localises to the cell membrane. It carries out the reaction Na(+)(in) + 2 H(+)(out) = Na(+)(out) + 2 H(+)(in). In terms of biological role, na(+)/H(+) antiporter that extrudes sodium in exchange for external protons. The polypeptide is Na(+)/H(+) antiporter NhaA 2 (Clavibacter michiganensis subsp. michiganensis (strain NCPPB 382)).